Reading from the N-terminus, the 188-residue chain is Putative manganese efflux pump MntP (188 aa).

The next 6 helical transmembrane spans lie at 3-23 (LYAL…VALA), 35-55 (IAAT…AGWV), 63-83 (FISE…GLKM), 104-126 (WMTV…GLAF), 140-160 (MAAT…GVLF), and 167-187 (AGGL…LGLI).

This sequence belongs to the MntP (TC 9.B.29) family.

The protein resides in the cell inner membrane. In terms of biological role, probably functions as a manganese efflux pump. The protein is Putative manganese efflux pump MntP of Neisseria gonorrhoeae (strain ATCC 700825 / FA 1090).